Reading from the N-terminus, the 161-residue chain is V-type proton ATPase 16 kDa proteolipid subunit c 2 (161 aa).

Over 1–15 the chain is Lumenal; that stretch reads MSYDLETAEHAAYAP. A helical membrane pass occupies residues 16 to 36; the sequence is FFGYMGAASAQIFTVLGAAYG. Over 37–58 the chain is Cytoplasmic; that stretch reads TAKSAVGICSMGVMRPELIMKS. A helical transmembrane segment spans residues 59–79; that stretch reads VIPVIMAGIIGIYGLVVAMVL. The Lumenal segment spans residues 80 to 98; it reads KGKVQAASAGYDLNKGFAH. A helical membrane pass occupies residues 99 to 119; that stretch reads LAAGLTCGLCGLGAGYAIGIV. The Cytoplasmic segment spans residues 120 to 137; sequence GDAGVRGTAQQPRLFVGM. The helical transmembrane segment at 138–158 threads the bilayer; sequence ILILIFSEVLGLYGMIVALIL. Over 159-161 the chain is Lumenal; the sequence is GTS.

This sequence belongs to the V-ATPase proteolipid subunit family. As to quaternary structure, V-ATPase is a heteromultimeric enzyme made up of two complexes: the ATP-hydrolytic V1 complex and the proton translocation V0 complex. The V1 complex consists of three catalytic AB heterodimers that form a heterohexamer, three peripheral stalks each consisting of EG heterodimers, one central rotor including subunits D and F, and the regulatory subunits C and H. The proton translocation complex V0 consists of the proton transport subunit a, a ring of proteolipid subunits c9c'', rotary subunit d, subunits e and f, and the accessory subunits vah-19/Ac45 and vah-20/PRR.

Its subcellular location is the membrane. Functionally, proton-conducting pore forming subunit of the V0 complex of vacuolar(H+)-ATPase (V-ATPase), a multisubunit enzyme composed of a peripheral complex (V1) that hydrolyzes ATP and a membrane integral complex (V0) that translocates protons. V-ATPase is responsible for acidifying and maintaining the pH of intracellular compartments and in some cell types, is targeted to the plasma membrane, where it is responsible for acidifying the extracellular environment. Involved in necrotic cell death. Required along with other vacuolar ATPase components for the removal of protein aggregates which form in immature oocytes in the distal gonad. This removal occurs as the oocytes mature and move to the proximal gonad, is triggered by the introduction of sperm through mating and occurs before fertilization. The introduction of sperm triggers V-ATPase accumulation in proximal oocytes and induces lysosomal acidification which leads to engulfing of protein aggregates by lysosomes and subsequent clearance of the aggregates. Lysosomal acidification also leads to changes in mitochondrial morphology and function. Mitochondria in distal immature oocytes are fragmented, produce high levels of reactive oxygen species (ROS) and have high membrane potential, indicative of metabolic inactivity. In contrast, mitochondria in proximal mature oocytes are tubular with lower ROS levels and membrane potential, indicative of an active metabolic state required for aggregate mobilization before clearance. The sequence is that of V-type proton ATPase 16 kDa proteolipid subunit c 2 from Caenorhabditis briggsae.